A 176-amino-acid chain; its full sequence is O-acetyl-ADP-ribose deacetylase (176 aa).

A Macro domain is found at 1–175 (MSGRINVVQG…LYQRLLGQYD (175 aa)). Substrate is bound by residues 11–12 (DI), Asn-25, 33–35 (GVD), and 122–126 (STGIY). The active-site Proton acceptor is the Asp-35.

It belongs to the MacroD-type family. YmdB subfamily. Homodimer. Interacts with RNase III.

The enzyme catalyses 3''-O-acetyl-ADP-D-ribose + H2O = ADP-D-ribose + acetate + H(+). It catalyses the reaction 2''-O-acetyl-ADP-D-ribose + H2O = ADP-D-ribose + acetate + H(+). Its function is as follows. Deacetylates O-acetyl-ADP ribose to yield ADP-ribose and free acetate. Down-regulates ribonuclease 3 (RNase III) activity. Acts by interacting directly with the region of the ribonuclease that is required for dimerization/activation. This is O-acetyl-ADP-ribose deacetylase from Cronobacter turicensis (strain DSM 18703 / CCUG 55852 / LMG 23827 / z3032).